Reading from the N-terminus, the 374-residue chain is Alanine racemase (374 aa).

Lys-35 serves as the catalytic Proton acceptor; specific for D-alanine. The residue at position 35 (Lys-35) is an N6-(pyridoxal phosphate)lysine. Arg-130 serves as a coordination point for substrate. Tyr-253 functions as the Proton acceptor; specific for L-alanine in the catalytic mechanism. Met-305 serves as a coordination point for substrate.

Belongs to the alanine racemase family. It depends on pyridoxal 5'-phosphate as a cofactor.

The enzyme catalyses L-alanine = D-alanine. The protein operates within amino-acid biosynthesis; D-alanine biosynthesis; D-alanine from L-alanine: step 1/1. Catalyzes the interconversion of L-alanine and D-alanine. May also act on other amino acids. The protein is Alanine racemase (alr) of Ralstonia pickettii (strain 12J).